The chain runs to 101 residues: Iron-sulfur cluster assembly protein CyaY (101 aa).

Belongs to the frataxin family.

Functionally, involved in iron-sulfur (Fe-S) cluster assembly. May act as a regulator of Fe-S biogenesis. The sequence is that of Iron-sulfur cluster assembly protein CyaY from Haemophilus influenzae (strain PittEE).